We begin with the raw amino-acid sequence, 181 residues long: Large ribosomal subunit protein uL5 (181 aa).

It belongs to the universal ribosomal protein uL5 family. As to quaternary structure, part of the 50S ribosomal subunit; part of the 5S rRNA/L5/L18/L25 subcomplex. Contacts the 5S rRNA and the P site tRNA. Forms a bridge to the 30S subunit in the 70S ribosome.

Functionally, this is one of the proteins that bind and probably mediate the attachment of the 5S RNA into the large ribosomal subunit, where it forms part of the central protuberance. In the 70S ribosome it contacts protein S13 of the 30S subunit (bridge B1b), connecting the 2 subunits; this bridge is implicated in subunit movement. Contacts the P site tRNA; the 5S rRNA and some of its associated proteins might help stabilize positioning of ribosome-bound tRNAs. The sequence is that of Large ribosomal subunit protein uL5 from Picosynechococcus sp. (strain ATCC 27264 / PCC 7002 / PR-6) (Agmenellum quadruplicatum).